Reading from the N-terminus, the 168-residue chain is MEGWRISLLNEKEKTIFVDADACPVKEEIMLIASQVSVRVIFVASFEHYQLSRSKDENWVYVDPHKEAADLYIANHVRSGDVVVTQDIGLASLLLNRNIAVLSERGRSYTEDTIDFALMSRHMSGKMRRSGIHSKGPKKLNKEDRNRFVTLLKKILSNDEGISNQNIE.

It belongs to the UPF0178 family.

The chain is UPF0178 protein RBAM_023530 from Bacillus velezensis (strain DSM 23117 / BGSC 10A6 / LMG 26770 / FZB42) (Bacillus amyloliquefaciens subsp. plantarum).